A 204-amino-acid chain; its full sequence is Large ribosomal subunit protein mL67 (204 aa).

This sequence belongs to the mitochondrion-specific ribosomal protein mL67 family.

The protein resides in the nucleus. It is found in the mitochondrion. Its function is as follows. Transcription factor involved in regulation of RNA polymerase II-dependent transcription. Also involved in regulation of mitochondrial DNA recombination, maintenance and repair, and generation of homoplasmic cells. This chain is Large ribosomal subunit protein mL67 (MHR1), found in Yarrowia lipolytica (strain CLIB 122 / E 150) (Yeast).